Consider the following 459-residue polypeptide: MAP kinase-interacting serine/threonine-protein kinase 2 (459 aa).

The disordered stretch occupies residues 37–67 (DFSPQCEARPDMPSSQPIDIPDAKKRGRKKK). A Nuclear localization signal motif is present at residues 60–66 (KKRGRKK). Residue Ser74 is modified to Phosphoserine. The Protein kinase domain maps to 84 to 368 (QLQEDVLGEG…AAQVLQHPWV (285 aa)). ATP-binding positions include 90–98 (LGEGAHARV) and Lys113. 160 to 162 (EKM) serves as a coordination point for staurosporine. Asp205 acts as the Proton acceptor in catalysis. Glu209 lines the staurosporine pocket. Residues Thr244 and Thr249 each carry the phosphothreonine modification. Residues Cys299, Cys311, and Cys314 each coordinate Zn(2+). Position 379 is a phosphothreonine (Thr379). A phosphoserine mark is found at Ser431 and Ser434. The MAP kinase binding signature appears at 438–442 (LAQRR). At Ser446 the chain carries Phosphoserine. The residue at position 450 (Thr450) is a Phosphothreonine.

It belongs to the protein kinase superfamily. CAMK Ser/Thr protein kinase family. As to quaternary structure, interacts with ESR2 and EIF4E in the nucleus. Monomer. Interacts with the C-terminal regions of EIF4G1 and EIF4G2; this interaction is promoted when MAPK pathways are repressed but repressed upon ERK proteins activation. Also binds to dephosphorylated MAPK3/ERK1 and MAPK1/ERK2. Interaction with phosphorylated MAPK3/ERK1 and MAPK1/ERK2 protects it from dephosphorylation and inactivation. Mg(2+) serves as cofactor. The cofactor is Zn(2+). Post-translationally, dual phosphorylation of Thr-244 and Thr-249 activates the kinase. Phosphorylation of Thr-379 activates the kinase. Phosphorylated upon arsenic trioxide As(2)O(3) treatment. Phosphorylated by MAPK1/ERK2, MAPK11 and MAPK14. Dephosphorylated by PP2A. Ubiquitously expressed in all tissues examined, with high levels in skeletal muscle and low levels in brain.

It localises to the cytoplasm. The protein localises to the nucleus. The protein resides in the PML body. It carries out the reaction L-seryl-[protein] + ATP = O-phospho-L-seryl-[protein] + ADP + H(+). The enzyme catalyses L-threonyl-[protein] + ATP = O-phospho-L-threonyl-[protein] + ADP + H(+). Inhibited by CGP57380 and staurosporine. Its function is as follows. Serine/threonine-protein kinase that phosphorylates SFPQ/PSF, HNRNPA1 and EIF4E. May play a role in the response to environmental stress and cytokines. Appears to regulate translation by phosphorylating EIF4E, thus increasing the affinity of this protein for the 7-methylguanosine-containing mRNA cap. Required for mediating PP2A-inhibition-induced EIF4E phosphorylation. Triggers EIF4E shuttling from cytoplasm to nucleus. Enhances the formation of EIF4F complex in pachytene spermatocytes, thus promoting mRNA translation during spermatogenesis. Displays a high basal kinase activity. Acts as a mediator of the suppressive effects of IFNgamma on hematopoiesis. Negative regulator for signals that control generation of arsenic trioxide As(2)O(3)-dependent apoptosis and anti-leukemic responses. Involved in anti-apoptotic signaling in response to serum withdrawal. In Mus musculus (Mouse), this protein is MAP kinase-interacting serine/threonine-protein kinase 2 (Mknk2).